A 221-amino-acid chain; its full sequence is Probable septum site-determining protein MinC (221 aa).

The protein belongs to the MinC family. As to quaternary structure, interacts with MinD and FtsZ.

In terms of biological role, cell division inhibitor that blocks the formation of polar Z ring septums. Rapidly oscillates between the poles of the cell to destabilize FtsZ filaments that have formed before they mature into polar Z rings. Prevents FtsZ polymerization. In Shewanella halifaxensis (strain HAW-EB4), this protein is Probable septum site-determining protein MinC.